We begin with the raw amino-acid sequence, 497 residues long: NAD(P)H-quinone oxidoreductase chain 4, chloroplastic (497 aa).

Helical transmembrane passes span 4–24, 35–55, 87–107, 113–133, 134–154, 167–187, 207–227, 242–262, 274–294, 313–333, 386–406, 416–436, and 462–482; these read LPWL…IPLF, YTLG…CCHF, MGLI…AWPV, LFHF…ASQD, ILLF…LLSI, FILY…TIGL, IALE…KLPI, HYST…YGLI, AIFA…ASLI, MGFV…GAIL, LALP…GIVI, IVIT…LLSM, and IFIS…PNLV.

It belongs to the complex I subunit 4 family.

It is found in the plastid. The protein resides in the chloroplast thylakoid membrane. It carries out the reaction a plastoquinone + NADH + (n+1) H(+)(in) = a plastoquinol + NAD(+) + n H(+)(out). The catalysed reaction is a plastoquinone + NADPH + (n+1) H(+)(in) = a plastoquinol + NADP(+) + n H(+)(out). The chain is NAD(P)H-quinone oxidoreductase chain 4, chloroplastic from Angiopteris evecta (Mule's foot fern).